We begin with the raw amino-acid sequence, 105 residues long: Protein METHYLENE BLUE SENSITIVITY 1 (105 aa).

The interval 26–46 (RGGGKAGIADRTGKEKGGHAK) is disordered. Residues 36-46 (RTGKEKGGHAK) show a composition bias toward basic and acidic residues.

In terms of tissue distribution, mainly expressed in the epidermis.

The protein localises to the nucleus. It localises to the cytoplasm. The protein resides in the stress granule. Its function is as follows. Required for acclimation to reactive oxygen species (ROS) responses downstream of beta-cyclocitral (beta-cc) or mediated by dihydroactinidiolide, including singlet oxygen 1O(2) detoxification reactions, especially upon light-mediated photooxidative stress, and leading to programmed cell death. Prevents leaf senescence. Involved in cold acclimation. The protein is Protein METHYLENE BLUE SENSITIVITY 1 of Arabidopsis thaliana (Mouse-ear cress).